We begin with the raw amino-acid sequence, 110 residues long: UPF0060 membrane protein Pmen_1247 (110 aa).

4 helical membrane-spanning segments follow: residues 5–25 (LWFL…WMWL), 31–51 (AWWI…LTRV), 59–79 (AYAA…ALIE), and 84–104 (MLSD…ILFA).

Belongs to the UPF0060 family.

The protein resides in the cell inner membrane. In Ectopseudomonas mendocina (strain ymp) (Pseudomonas mendocina), this protein is UPF0060 membrane protein Pmen_1247.